Consider the following 345-residue polypeptide: Phosphoribosylformylglycinamidine cyclo-ligase (345 aa).

The protein belongs to the AIR synthase family.

It is found in the cytoplasm. It catalyses the reaction 2-formamido-N(1)-(5-O-phospho-beta-D-ribosyl)acetamidine + ATP = 5-amino-1-(5-phospho-beta-D-ribosyl)imidazole + ADP + phosphate + H(+). It participates in purine metabolism; IMP biosynthesis via de novo pathway; 5-amino-1-(5-phospho-D-ribosyl)imidazole from N(2)-formyl-N(1)-(5-phospho-D-ribosyl)glycinamide: step 2/2. This chain is Phosphoribosylformylglycinamidine cyclo-ligase, found in Shewanella denitrificans (strain OS217 / ATCC BAA-1090 / DSM 15013).